A 108-amino-acid chain; its full sequence is Protein YcgL (108 aa).

Positions 12 to 96 (MFCVIYRSSK…PPEDLLKQHL (85 aa)) constitute a YcgL domain.

The protein is Protein YcgL of Escherichia coli O127:H6 (strain E2348/69 / EPEC).